A 209-amino-acid chain; its full sequence is Chaperone protein TorD (209 aa).

It belongs to the TorD/DmsD family. TorD subfamily.

It is found in the cytoplasm. Its function is as follows. Involved in the biogenesis of TorA. Acts on TorA before the insertion of the molybdenum cofactor and, as a result, probably favors a conformation of the apoenzyme that is competent for acquiring the cofactor. This is Chaperone protein TorD from Shewanella sp. (strain ANA-3).